The sequence spans 187 residues: Elongation factor P (187 aa).

This sequence belongs to the elongation factor P family.

It is found in the cytoplasm. It participates in protein biosynthesis; polypeptide chain elongation. Involved in peptide bond synthesis. Stimulates efficient translation and peptide-bond synthesis on native or reconstituted 70S ribosomes in vitro. Probably functions indirectly by altering the affinity of the ribosome for aminoacyl-tRNA, thus increasing their reactivity as acceptors for peptidyl transferase. The polypeptide is Elongation factor P (Mycobacterium marinum (strain ATCC BAA-535 / M)).